An 876-amino-acid chain; its full sequence is DNA polymerase 1 (876 aa).

This sequence belongs to the DNA polymerase type-B family.

The catalysed reaction is DNA(n) + a 2'-deoxyribonucleoside 5'-triphosphate = DNA(n+1) + diphosphate. This polymerase possesses two enzymatic activities: DNA synthesis (polymerase) and an exonucleolytic activity that degrades single-stranded DNA in the 3'- to 5'-direction. The sequence is that of DNA polymerase 1 (dpo1) from Sulfolobus acidocaldarius (strain ATCC 33909 / DSM 639 / JCM 8929 / NBRC 15157 / NCIMB 11770).